Consider the following 530-residue polypeptide: Cytochrome P450 monooxygenase ausG (530 aa).

A helical membrane pass occupies residues 31–51; sequence LLVAYRLPGLLLLFSITIILF. A heme-binding site is contributed by C470.

The protein belongs to the cytochrome P450 family. It depends on heme as a cofactor.

The protein localises to the membrane. Its pathway is secondary metabolite biosynthesis; terpenoid biosynthesis. Cytochrome P450 monooxygenase; part of the gene cluster B that mediates the biosynthesis of the fungal meroterpenoid acetoxydehydroaustin. The first step of the pathway is the synthesis of 3,5-dimethylorsellinic acid by the polyketide synthase ausA. 3,5-dimethylorsellinic acid is then prenylated by the polyprenyl transferase ausN. Further epoxidation by the FAD-dependent monooxygenase ausM and cyclization by the probable terpene cyclase ausL lead to the formation of protoaustinoid A. Protoaustinoid A is then oxidized to spiro-lactone preaustinoid A3 by the combined action of the FAD-binding monooxygenases ausB and ausC, and the dioxygenase ausE. Acid-catalyzed keto-rearrangement and ring contraction of the tetraketide portion of preaustinoid A3 by ausJ lead to the formation of preaustinoid A4. The aldo-keto reductase ausK, with the help of ausH, is involved in the next step by transforming preaustinoid A4 into isoaustinone which is in turn hydroxylated by the P450 monooxygenase ausI to form austinolide. The cytochrome P450 monooxygenase ausG then modifies austinolide to austinol. Austinol is further acetylated to austin by the O-acetyltransferase ausP, which spontaneously changes to dehydroaustin. The cytochrome P450 monooxygenase then converts dehydroaustin is into 7-dehydrodehydroaustin. The hydroxylation catalyzed by ausR permits the second O-acetyltransferase ausQ to add an additional acetyl group to the molecule, leading to the formation of acetoxydehydroaustin. Due to genetic rearrangements of the clusters and the subsequent loss of some enzymes, the end product of the Penicillium brasilianum austinoid biosynthesis clusters is acetoxydehydroaustin. The protein is Cytochrome P450 monooxygenase ausG of Penicillium brasilianum.